The following is a 530-amino-acid chain: Cytochrome P450 2U1 (530 aa).

4 consecutive transmembrane segments (helical) span residues 21-41 (VRAT…GWVW), 99-119 (VYGN…LSDF), 247-267 (ICLH…YLPF), and 328-348 (LFYI…NSLL). Heme is bound at residue cysteine 476. Residues 481 to 501 (LAKMELFLMFVSLMQTFTFAL) form a helical membrane-spanning segment.

It belongs to the cytochrome P450 family. Heme serves as cofactor. In terms of tissue distribution, widely expressed. Expressed in heart, brain and liver.

It is found in the endoplasmic reticulum membrane. It localises to the microsome membrane. The protein resides in the mitochondrion inner membrane. The catalysed reaction is an omega-methyl-long-chain fatty acid + reduced [NADPH--hemoprotein reductase] + O2 = an omega-hydroxy-long-chain fatty acid + oxidized [NADPH--hemoprotein reductase] + H2O + H(+). The enzyme catalyses (5Z,8Z,11Z,14Z)-eicosatetraenoate + reduced [NADPH--hemoprotein reductase] + O2 = 19-hydroxy-(5Z,8Z,11Z,14Z)-eicosatetraenoate + oxidized [NADPH--hemoprotein reductase] + H2O + H(+). It carries out the reaction (5Z,8Z,11Z,14Z)-eicosatetraenoate + reduced [NADPH--hemoprotein reductase] + O2 = 20-hydroxy-(5Z,8Z,11Z,14Z)-eicosatetraenoate + oxidized [NADPH--hemoprotein reductase] + H2O + H(+). It catalyses the reaction N-[(5Z,8Z,11Z,14Z)-eicosatetraenoyl]-serotonin + reduced [NADPH--hemoprotein reductase] + O2 = 2-oxo-N-[(5Z,8Z,11Z,14Z)-eicosatetraenoyl]-serotonin + oxidized [NADPH--hemoprotein reductase] + H2O + H(+). In terms of biological role, a cytochrome P450 monooxygenase involved in the metabolism of arachidonic acid and its conjugates. Mechanistically, uses molecular oxygen inserting one oxygen atom into a substrate, and reducing the second into a water molecule, with two electrons provided by NADPH via cytochrome P450 reductase (CPR; NADPH-ferrihemoprotein reductase). Acts as an omega and omega-1 hydroxylase for arachidonic acid and possibly for other long chain fatty acids. May modulate the arachidonic acid signaling pathway and play a role in other fatty acid signaling processes. May down-regulate the biological activities of N-arachidonoyl-serotonin, an endocannabinoid that has anti-nociceptive effects through inhibition of fatty acid amide hydrolase FAAH, TRPV1 receptor and T-type calcium channels. Catalyzes C-2 oxidation of the indole ring of N-arachidonoyl-serotonin forming a less active product 2-oxo-N-arachidonoyl-serotonin. In Mus musculus (Mouse), this protein is Cytochrome P450 2U1.